The sequence spans 612 residues: Threonine--tRNA ligase (612 aa).

The tract at residues 218–509 (DHRKLGVELG…LSEHFGGNFP (292 aa)) is catalytic. Residues Cys-310, His-361, and His-486 each contribute to the Zn(2+) site.

Belongs to the class-II aminoacyl-tRNA synthetase family. In terms of assembly, homodimer. It depends on Zn(2+) as a cofactor.

It is found in the cytoplasm. The catalysed reaction is tRNA(Thr) + L-threonine + ATP = L-threonyl-tRNA(Thr) + AMP + diphosphate + H(+). In terms of biological role, catalyzes the attachment of threonine to tRNA(Thr) in a two-step reaction: L-threonine is first activated by ATP to form Thr-AMP and then transferred to the acceptor end of tRNA(Thr). Also edits incorrectly charged L-seryl-tRNA(Thr). This is Threonine--tRNA ligase from Helicobacter pylori (strain J99 / ATCC 700824) (Campylobacter pylori J99).